The primary structure comprises 299 residues: Taste receptor type 2 member 4 (299 aa).

Residues 1 to 9 (MLRLFYFSA) lie on the Extracellular side of the membrane. The chain crosses the membrane as a helical span at residues 10 to 30 (IIASVILNFVGIIMNLFITVV). At 31-46 (NCKTWVKSHRISSSDR) the chain is on the cytoplasmic side. The helical transmembrane segment at 47–67 (ILFSLGITRFLMLGLFLVNTI) threads the bilayer. Over 68-81 (YFVSSNTERSVYLS) the chain is Extracellular. Residues 82–102 (AFFVLCFMFLDSSSLWFVTLL) form a helical membrane-spanning segment. The Cytoplasmic segment spans residues 103–131 (NILYCVKITNFQHSVFLLLKRNISPKIPR). Residues 132–152 (LLLACVLISAFTTCLYITLSQ) traverse the membrane as a helical segment. The Extracellular segment spans residues 153-172 (ASPFPELVTTRNNTSFNINE). Residues asparagine 164 and asparagine 165 are each glycosylated (N-linked (GlcNAc...) asparagine). The chain crosses the membrane as a helical span at residues 173–193 (GILSLVVSLVLSSSLQFIINV). Residues 194–230 (TSASLLIHSLRRHIQKMQKNATGFWNPQTEAHVGAMK) are Cytoplasmic-facing. A helical membrane pass occupies residues 231–251 (LMVYFLILYIPYSVATLVQYL). Residues 252 to 262 (PFYAGMDMGTK) are Extracellular-facing. The chain crosses the membrane as a helical span at residues 263–283 (SICLIFATLYSPGHSVLIIIT). The Cytoplasmic segment spans residues 284–299 (HPKLKTTAKKILCFKK).

It belongs to the G-protein coupled receptor T2R family.

It localises to the membrane. The protein resides in the cell projection. The protein localises to the cilium membrane. Functionally, gustducin-coupled receptor implicated in the perception of bitter compounds in the oral cavity and the gastrointestinal tract. Signals through PLCB2 and the calcium-regulated cation channel TRPM5. In airway epithelial cells, binding of denatonium increases the intracellular calcium ion concentration and stimulates ciliary beat frequency. This chain is Taste receptor type 2 member 4 (TAS2R4), found in Pan paniscus (Pygmy chimpanzee).